The chain runs to 258 residues: Lyso-ornithine lipid O-acyltransferase (258 aa).

A helical membrane pass occupies residues 7–29 (LLRSARLLGLVALGLGLAAWVSL).

Belongs to the 1-acyl-sn-glycerol-3-phosphate acyltransferase family. OlsA subfamily.

It localises to the membrane. It carries out the reaction a lyso-ornithine lipid + a fatty acyl-[ACP] = an N(2)-[(3R)-3-(acyloxy)acyl]-L-ornithine lipid + holo-[ACP]. It functions in the pathway lipid metabolism. In terms of biological role, catalyzes the second step in the formation of ornithine lipids, which are phosphorus-free membrane lipids. Uses acyl-acyl carrier protein (acyl-AcpP) as an acyl donor and converts lyso-ornithine lipid (LOL) into ornithine lipid (OL). This is Lyso-ornithine lipid O-acyltransferase from Pseudomonas aeruginosa (strain ATCC 15692 / DSM 22644 / CIP 104116 / JCM 14847 / LMG 12228 / 1C / PRS 101 / PAO1).